The following is a 180-amino-acid chain: MVEAWYMDESQEDQRAPHRLQPNRAVSLEQLRRLGVAYRRLDADNYETDPRLKEIREAENYSWMDIVTIHKDKLPNYEEKIKTFYEEHLHLDDEIRYILDGSGYFDVRDKDDKWIRISMEKGDMITLPAGIYHRFTLDENNYVKAMRLFVGEPVWTAYNRPADDFPARKQYMKFLAEEAQ.

Fe(2+) contacts are provided by His88, His90, Glu94, and His133. Residues His88, His90, Glu94, and His133 each contribute to the Ni(2+) site.

This sequence belongs to the acireductone dioxygenase (ARD) family. Monomer. Interacts with MMP14. Fe(2+) is required as a cofactor. Ni(2+) serves as cofactor.

Its subcellular location is the cytoplasm. The protein resides in the nucleus. It localises to the cell membrane. It catalyses the reaction 1,2-dihydroxy-5-(methylsulfanyl)pent-1-en-3-one + O2 = 4-methylsulfanyl-2-oxobutanoate + formate + 2 H(+). The enzyme catalyses 1,2-dihydroxy-5-(methylsulfanyl)pent-1-en-3-one + O2 = 3-(methylsulfanyl)propanoate + CO + formate + 2 H(+). Its pathway is amino-acid biosynthesis; L-methionine biosynthesis via salvage pathway; L-methionine from S-methyl-5-thio-alpha-D-ribose 1-phosphate: step 5/6. In terms of biological role, catalyzes 2 different reactions between oxygen and the acireductone 1,2-dihydroxy-3-keto-5-methylthiopentene (DHK-MTPene) depending upon the metal bound in the active site. Fe-containing acireductone dioxygenase (Fe-ARD) produces formate and 2-keto-4-methylthiobutyrate (KMTB), the alpha-ketoacid precursor of methionine in the methionine recycle pathway. Ni-containing acireductone dioxygenase (Ni-ARD) produces methylthiopropionate, carbon monoxide and formate, and does not lie on the methionine recycle pathway. In Gallus gallus (Chicken), this protein is Acireductone dioxygenase.